The primary structure comprises 527 residues: Berberine bridge enzyme-like 14 (527 aa).

An N-terminal signal peptide occupies residues 1 to 23; the sequence is MKSSTTQTLIFTVFLLLIPTSFA. Cysteine 35 and cysteine 96 are disulfide-bonded. N-linked (GlcNAc...) asparagine glycans are attached at residues asparagine 47, asparagine 72, asparagine 161, asparagine 296, asparagine 328, asparagine 396, and asparagine 481. Positions 74–249 constitute an FAD-binding PCMH-type domain; it reads TTRKPVAIVA…LAWKIKLVPV (176 aa). Residues 111–174 constitute a cross-link (6-(S-cysteinyl)-8alpha-(pros-histidyl)-FAD (His-Cys)); the sequence is HDYDGMSYLS…NLRGFPAGIC (64 aa).

This sequence belongs to the oxygen-dependent FAD-linked oxidoreductase family. Requires FAD as cofactor. The FAD cofactor is bound via a bicovalent 6-S-cysteinyl, 8alpha-N1-histidyl FAD linkage.

It localises to the secreted. It is found in the cell wall. The polypeptide is Berberine bridge enzyme-like 14 (Arabidopsis thaliana (Mouse-ear cress)).